Here is a 383-residue protein sequence, read N- to C-terminus: Succinyl-diaminopimelate desuccinylase (383 aa).

Residue His73 coordinates Zn(2+). Asp75 is an active-site residue. Residue Asp107 coordinates Zn(2+). Glu141 (proton acceptor) is an active-site residue. Zn(2+) contacts are provided by Glu142, Glu170, and His356.

Belongs to the peptidase M20A family. DapE subfamily. As to quaternary structure, homodimer. Requires Zn(2+) as cofactor. Co(2+) serves as cofactor.

It carries out the reaction N-succinyl-(2S,6S)-2,6-diaminopimelate + H2O = (2S,6S)-2,6-diaminopimelate + succinate. The protein operates within amino-acid biosynthesis; L-lysine biosynthesis via DAP pathway; LL-2,6-diaminopimelate from (S)-tetrahydrodipicolinate (succinylase route): step 3/3. Its function is as follows. Catalyzes the hydrolysis of N-succinyl-L,L-diaminopimelic acid (SDAP), forming succinate and LL-2,6-diaminopimelate (DAP), an intermediate involved in the bacterial biosynthesis of lysine and meso-diaminopimelic acid, an essential component of bacterial cell walls. In Pseudomonas paraeruginosa (strain DSM 24068 / PA7) (Pseudomonas aeruginosa (strain PA7)), this protein is Succinyl-diaminopimelate desuccinylase.